Reading from the N-terminus, the 225-residue chain is uncharacterized protein (225 aa).

Residues Asn48, Asn58, Asn105, and Asn108 are each glycosylated (N-linked (GlcNAc...) asparagine; by host). A helical membrane pass occupies residues 156–178; the sequence is LWGYLKQPLVMVGIAAVVGYLIY.

It belongs to the ascovirus HvAv ORF58 family.

It is found in the membrane. This is an uncharacterized protein from Heliothis virescens ascovirus 3e (HvAV-3e).